The primary structure comprises 529 residues: Putative UPF0481 protein At3g02645 (529 aa).

N-linked (GlcNAc...) asparagine glycosylation is found at asparagine 365 and asparagine 403. Residues 498-518 (ILAFLAAVLLLMLVSLQLFSL) traverse the membrane as a helical segment.

This sequence belongs to the UPF0481 family.

Its subcellular location is the membrane. This chain is Putative UPF0481 protein At3g02645, found in Arabidopsis thaliana (Mouse-ear cress).